Consider the following 268-residue polypeptide: Phosphate import ATP-binding protein PstB 2 (268 aa).

The ABC transporter domain occupies 22 to 263 (MALTGVNFYY…PKVKRTEDYI (242 aa)). ATP is bound at residue 54-61 (GPSGCGKS).

It belongs to the ABC transporter superfamily. Phosphate importer (TC 3.A.1.7) family. The complex is composed of two ATP-binding proteins (PstB), two transmembrane proteins (PstC and PstA) and a solute-binding protein (PstS).

The protein resides in the cell inner membrane. It carries out the reaction phosphate(out) + ATP + H2O = ADP + 2 phosphate(in) + H(+). Part of the ABC transporter complex PstSACB involved in phosphate import. Responsible for energy coupling to the transport system. The sequence is that of Phosphate import ATP-binding protein PstB 2 from Rhizobium johnstonii (strain DSM 114642 / LMG 32736 / 3841) (Rhizobium leguminosarum bv. viciae).